Here is an 88-residue protein sequence, read N- to C-terminus: Small ribosomal subunit protein bS20 (88 aa).

Residues 1–25 (MANSPQAKKRARQNERRAEVNKARR) form a disordered region. Basic and acidic residues predominate over residues 12–22 (RQNERRAEVNK).

It belongs to the bacterial ribosomal protein bS20 family.

Functionally, binds directly to 16S ribosomal RNA. The protein is Small ribosomal subunit protein bS20 of Dinoroseobacter shibae (strain DSM 16493 / NCIMB 14021 / DFL 12).